We begin with the raw amino-acid sequence, 113 residues long: Regulator of rDNA transcription protein 7 (113 aa).

A run of 2 helical transmembrane segments spans residues 13 to 35 and 70 to 92; these read FLPI…LFYN and FLLG…LLFL.

Its subcellular location is the membrane. Its function is as follows. Identified in a screen for mutants with decreased levels of rDNA transcription. The sequence is that of Regulator of rDNA transcription protein 7 (RRT7) from Saccharomyces cerevisiae (strain ATCC 204508 / S288c) (Baker's yeast).